The chain runs to 125 residues: Small ribosomal subunit protein uS12 (125 aa).

The interval 1–23 (MATVNQLVRKGRTKRTAKSSVPA) is disordered. 3-methylthioaspartic acid is present on D89. The tract at residues 102–125 (ADTAGVDKRRQGRSKYGAKRPKKK) is disordered. The span at 111 to 125 (RQGRSKYGAKRPKKK) shows a compositional bias: basic residues.

It belongs to the universal ribosomal protein uS12 family. As to quaternary structure, part of the 30S ribosomal subunit. Contacts proteins S8 and S17. May interact with IF1 in the 30S initiation complex.

With S4 and S5 plays an important role in translational accuracy. Functionally, interacts with and stabilizes bases of the 16S rRNA that are involved in tRNA selection in the A site and with the mRNA backbone. Located at the interface of the 30S and 50S subunits, it traverses the body of the 30S subunit contacting proteins on the other side and probably holding the rRNA structure together. The combined cluster of proteins S8, S12 and S17 appears to hold together the shoulder and platform of the 30S subunit. The chain is Small ribosomal subunit protein uS12 from Halorhodospira halophila (strain DSM 244 / SL1) (Ectothiorhodospira halophila (strain DSM 244 / SL1)).